The primary structure comprises 505 residues: 2,3-bisphosphoglycerate-independent phosphoglycerate mutase (505 aa).

Mn(2+) contacts are provided by aspartate 11 and serine 61. Catalysis depends on serine 61, which acts as the Phosphoserine intermediate. Substrate-binding positions include histidine 122, 152–153 (RD), arginine 184, arginine 190, 258–261 (RPDR), and lysine 331. Mn(2+) contacts are provided by aspartate 396, histidine 400, aspartate 437, histidine 438, and histidine 455.

It belongs to the BPG-independent phosphoglycerate mutase family. Monomer. The cofactor is Mn(2+).

It catalyses the reaction (2R)-2-phosphoglycerate = (2R)-3-phosphoglycerate. Its pathway is carbohydrate degradation; glycolysis; pyruvate from D-glyceraldehyde 3-phosphate: step 3/5. Its function is as follows. Catalyzes the interconversion of 2-phosphoglycerate and 3-phosphoglycerate. The sequence is that of 2,3-bisphosphoglycerate-independent phosphoglycerate mutase from Mesomycoplasma hyopneumoniae (strain 7448) (Mycoplasma hyopneumoniae).